The following is an 864-amino-acid chain: Structure-specific endonuclease subunit SLX4 (864 aa).

Disordered stretches follow at residues Met1 to Pro21, Leu49 to Gly69, Thr91 to Ala113, Ala161 to His190, Leu289 to Lys318, Thr346 to Pro385, Ala413 to Ser433, and Lys625 to Ser767. Residues Ser295–Ser306 show a composition bias toward polar residues. Positions Lys307–Lys318 are enriched in basic residues. Positions Gln656–Val668 are enriched in polar residues. Positions Val685–Lys695 are enriched in low complexity. Polar residues predominate over residues Pro743 to Ser767.

It belongs to the SLX4 family. As to quaternary structure, forms a heterodimer with SLX1. Post-translationally, phosphorylated in response to DNA damage.

The protein resides in the nucleus. Functionally, regulatory subunit of the SLX1-SLX4 structure-specific endonuclease that resolves DNA secondary structures generated during DNA repair and recombination. Has endonuclease activity towards branched DNA substrates, introducing single-strand cuts in duplex DNA close to junctions with ss-DNA. The polypeptide is Structure-specific endonuclease subunit SLX4 (Paracoccidioides lutzii (strain ATCC MYA-826 / Pb01) (Paracoccidioides brasiliensis)).